The sequence spans 215 residues: LysM and putative peptidoglycan-binding domain-containing protein 1 (215 aa).

The LysM domain maps to L37–I81. 2 stretches are compositionally biased toward polar residues: residues G86–E103 and G173–S189. Disordered regions lie at residues G86–F133 and A148–S203.

In Xenopus laevis (African clawed frog), this protein is LysM and putative peptidoglycan-binding domain-containing protein 1 (lysmd1).